The sequence spans 308 residues: Glutaminase 2 (308 aa).

Residues Ser66, Asn117, Glu161, Asn168, Tyr192, Tyr244, and Val262 each coordinate substrate.

The protein belongs to the glutaminase family. Homotetramer.

It catalyses the reaction L-glutamine + H2O = L-glutamate + NH4(+). The chain is Glutaminase 2 from Escherichia coli O157:H7.